Consider the following 342-residue polypeptide: Ribosomal RNA small subunit methyltransferase C (342 aa).

Belongs to the methyltransferase superfamily. RsmC family. In terms of assembly, monomer.

The protein resides in the cytoplasm. It carries out the reaction guanosine(1207) in 16S rRNA + S-adenosyl-L-methionine = N(2)-methylguanosine(1207) in 16S rRNA + S-adenosyl-L-homocysteine + H(+). Specifically methylates the guanine in position 1207 of 16S rRNA in the 30S particle. The polypeptide is Ribosomal RNA small subunit methyltransferase C (Salmonella enteritidis PT4 (strain P125109)).